The following is a 426-amino-acid chain: Histidine--tRNA ligase (426 aa).

It belongs to the class-II aminoacyl-tRNA synthetase family. As to quaternary structure, homodimer.

The protein localises to the cytoplasm. It catalyses the reaction tRNA(His) + L-histidine + ATP = L-histidyl-tRNA(His) + AMP + diphosphate + H(+). The chain is Histidine--tRNA ligase from Streptococcus pyogenes serotype M1.